The chain runs to 784 residues: Homoaconitase, mitochondrial (784 aa).

A mitochondrion-targeting transit peptide spans 1-32; that stretch reads MIHPVRRALAVAASRAPRQFLAAASRTTSVRS. Residues C399, C468, and C471 each coordinate [4Fe-4S] cluster. The disordered stretch occupies residues 572–596; the sequence is EAGLTPESTSSSSSSSSSSEEESLT. Residues 578–589 are compositionally biased toward low complexity; that stretch reads ESTSSSSSSSSS.

This sequence belongs to the aconitase/IPM isomerase family. It depends on [4Fe-4S] cluster as a cofactor.

Its subcellular location is the mitochondrion. The catalysed reaction is (2R,3S)-homoisocitrate = cis-homoaconitate + H2O. It participates in amino-acid biosynthesis; L-lysine biosynthesis via AAA pathway; L-alpha-aminoadipate from 2-oxoglutarate: step 3/5. Catalyzes the reversible hydration of cis-homoaconitate to (2R,3S)-homoisocitrate, a step in the alpha-aminoadipate pathway for lysine biosynthesis. This chain is Homoaconitase, mitochondrial (lys-4), found in Neurospora crassa (strain ATCC 24698 / 74-OR23-1A / CBS 708.71 / DSM 1257 / FGSC 987).